The chain runs to 73 residues: UPF0235 protein HY04AAS1_1378 (73 aa).

This sequence belongs to the UPF0235 family.

The protein is UPF0235 protein HY04AAS1_1378 of Hydrogenobaculum sp. (strain Y04AAS1).